The sequence spans 205 residues: NADH-quinone oxidoreductase subunit C (205 aa).

Belongs to the complex I 30 kDa subunit family. NDH-1 is composed of 14 different subunits. Subunits NuoB, C, D, E, F, and G constitute the peripheral sector of the complex.

It localises to the cell inner membrane. The catalysed reaction is a quinone + NADH + 5 H(+)(in) = a quinol + NAD(+) + 4 H(+)(out). In terms of biological role, NDH-1 shuttles electrons from NADH, via FMN and iron-sulfur (Fe-S) centers, to quinones in the respiratory chain. The immediate electron acceptor for the enzyme in this species is believed to be ubiquinone. Couples the redox reaction to proton translocation (for every two electrons transferred, four hydrogen ions are translocated across the cytoplasmic membrane), and thus conserves the redox energy in a proton gradient. This Nitrosospira multiformis (strain ATCC 25196 / NCIMB 11849 / C 71) protein is NADH-quinone oxidoreductase subunit C.